We begin with the raw amino-acid sequence, 37 residues long: MRVSASVKKICRNCKIIRRKGVVRVICTDQRHKQRQG.

Belongs to the bacterial ribosomal protein bL36 family.

The chain is Large ribosomal subunit protein bL36 from Acidovorax ebreus (strain TPSY) (Diaphorobacter sp. (strain TPSY)).